Here is a 257-residue protein sequence, read N- to C-terminus: Hydroxypyruvate/pyruvate aldolase (257 aa).

The active-site Proton acceptor is His48. Glu152 and Asp178 together coordinate a divalent metal cation.

This sequence belongs to the HpcH/HpaI aldolase family. It depends on a divalent metal cation as a cofactor.

It carries out the reaction D-glyceraldehyde + 3-hydroxypyruvate = 2-dehydro-D-gluconate. The enzyme catalyses D-glyceraldehyde + pyruvate = 2-dehydro-3-deoxy-L-galactonate. It catalyses the reaction 2-dehydro-3-deoxy-D-gluconate = D-glyceraldehyde + pyruvate. Aldolase which can catalyze in vitro the aldolisation reaction between hydroxypyruvate (HPA) or pyruvate (PA) and D-glyceraldehyde (D-GA). The condensation of hydroxypyruvate and D-glyceraldehyde produces 2-dehydro-D-gluconate as the major product. The condensation of pyruvate and D-glyceraldehyde produces 2-dehydro-3-deoxy-L-galactonate as the major product and 2-dehydro-3-deoxy-D-gluconate. The sequence is that of Hydroxypyruvate/pyruvate aldolase from Roseovarius nubinhibens (strain ATCC BAA-591 / DSM 15170 / ISM).